Reading from the N-terminus, the 155-residue chain is MASRNPPPQDYESDDESYEVLDLTEYARRHHWWNRVFGHSSGPMVEKYSVATQIVMGGVTGWCAGFLFQKVGKLAATAVGGGFLLLQVASHSGYVQIDWKRVEKDVNKAKRQIKKRANKAAPEINNIIEEATDFIKQNIVISSGFVGGFLLGLAS.

Over 1 to 47 (MASRNPPPQDYESDDESYEVLDLTEYARRHHWWNRVFGHSSGPMVEK) the chain is Cytoplasmic. Residues Ser-13 and Ser-17 each carry the phosphoserine modification. Tyr-18 carries the phosphotyrosine; by SRC modification. The short motif at 18–21 (YEVL) is the YXXL element. A helical transmembrane segment spans residues 48 to 68 (YSVATQIVMGGVTGWCAGFLF). Topologically, residues 69 to 74 (QKVGKL) are mitochondrial intermembrane. A helical membrane pass occupies residues 75–95 (AATAVGGGFLLLQVASHSGYV). The Cytoplasmic segment spans residues 96 to 133 (QIDWKRVEKDVNKAKRQIKKRANKAAPEINNIIEEATD). Residue Lys-119 forms a Glycyl lysine isopeptide (Lys-Gly) (interchain with G-Cter in ubiquitin) linkage. A helical membrane pass occupies residues 134-154 (FIKQNIVISSGFVGGFLLGLA). A topological domain (mitochondrial intermembrane) is located at residue Ser-155.

It belongs to the FUN14 family. In terms of assembly, interacts (via YXXL motif) with MAP1 LC3 family proteins MAP1LC3A, MAP1LC3B and GABARAP. Interacts with DNM1L/DPR1. Interacts with GPX4. In terms of processing, phosphorylation at Ser-13 by CK2 and at Tyr-18 by SRC inhibits activation of mitophagy. Following hypoxia, dephosphorylated at Tyr-18, leading to interaction with MAP1 LC3 family proteins and triggering mitophagy. Dephosphorylation is mediated by PGAM5. Phosphorylated by ULK1 at Ser-17 which enhances FUNDC1 binding to LC3. Ubiquitinated on Lys-119. Deubiquitinated by USP19; leading to hypoxia-induced DRP1 oligomerization and GTPase activity.

It localises to the mitochondrion outer membrane. In terms of biological role, integral mitochondrial outer-membrane protein that mediates the formation of mitochondria-associated endoplasmic reticulum membranes (MAMs). In turn, mediates angiogenesis and neoangiogenesis through interference with intracellular Ca(2+) communication and regulation of the vascular endothelial growth factor receptor KDR/VEGFR2 expression at both mRNA and protein levels. Also acts as an activator of hypoxia-induced mitophagy, an important mechanism for mitochondrial quality and homeostasis, by interacting with and recruiting LC3 protein family to mitochondria. Mechanistically, recruits DRP1 at ER-mitochondria contact sites leading to DRP1 oligomerization and GTPase activity to facilitate mitochondrial fission during hypoxia. Additionally, plays a role in hepatic ferroptosis by interacting directly with glutathione peroxidase/GPX4 to facilitate its recruitment into mitochondria through TOM/TIM complex where it is degraded by mitophagy. In Mus musculus (Mouse), this protein is FUN14 domain-containing protein 1 (Fundc1).